Here is a 251-residue protein sequence, read N- to C-terminus: Adenosine 5'-phosphosulfate reductase (251 aa).

[4Fe-4S] cluster contacts are provided by cysteine 121, cysteine 122, cysteine 204, and cysteine 207. Cysteine 232 serves as the catalytic Nucleophile; cysteine thiosulfonate intermediate.

This sequence belongs to the PAPS reductase family. CysH subfamily. [4Fe-4S] cluster serves as cofactor.

The protein resides in the cytoplasm. It catalyses the reaction [thioredoxin]-disulfide + sulfite + AMP + 2 H(+) = adenosine 5'-phosphosulfate + [thioredoxin]-dithiol. Its pathway is sulfur metabolism; hydrogen sulfide biosynthesis; sulfite from sulfate. Catalyzes the formation of sulfite from adenosine 5'-phosphosulfate (APS) using thioredoxin as an electron donor. This chain is Adenosine 5'-phosphosulfate reductase, found in Sinorhizobium fredii (strain NBRC 101917 / NGR234).